Consider the following 594-residue polypeptide: Glutamate decarboxylase 1 (594 aa).

Residues 1-13 are compositionally biased toward low complexity; it reads MASSTPSSSATSS. The segment at 1–23 is disordered; that stretch reads MASSTPSSSATSSNAGADPNTTN. Phosphoserine is present on Ser78. Position 190-192 (190-192) interacts with 4-aminobutanoate; that stretch reads QLS. Lys405 carries the post-translational modification N6-(pyridoxal phosphate)lysine. Arg567 provides a ligand contact to 4-aminobutanoate.

It belongs to the group II decarboxylase family. Homodimer. Pyridoxal 5'-phosphate serves as cofactor.

It catalyses the reaction L-glutamate + H(+) = 4-aminobutanoate + CO2. Catalyzes the synthesis of the inhibitory neurotransmitter gamma-aminobutyric acid (GABA) with pyridoxal 5'-phosphate as cofactor. The polypeptide is Glutamate decarboxylase 1 (GAD1) (Bos taurus (Bovine)).